Reading from the N-terminus, the 627-residue chain is Chaperone protein HtpG (627 aa).

The interval 1–339 is a; substrate-binding; it reads MKGQETRGFQ…SNDLPLNVSR (339 aa). Residues 340-555 are b; that stretch reads EILQDSRVTQ…ADEMSTQMAK (216 aa). Residues 556 to 627 are c; that stretch reads LFAAAGQQAP…IRRMNQLLSA (72 aa).

Belongs to the heat shock protein 90 family. In terms of assembly, homodimer.

The protein resides in the cytoplasm. Molecular chaperone. Has ATPase activity. This is Chaperone protein HtpG from Pectobacterium atrosepticum (strain SCRI 1043 / ATCC BAA-672) (Erwinia carotovora subsp. atroseptica).